Reading from the N-terminus, the 267-residue chain is Electron transfer flavoprotein subunit beta (267 aa).

Belongs to the ETF beta-subunit/FixA family. As to quaternary structure, heterodimer of an alpha and a beta subunit.

Functionally, participates in the electron transfer process during N,N-dimethylglycine (DMG) degradation to sarcosine. This Chromohalobacter salexigens (strain ATCC BAA-138 / DSM 3043 / CIP 106854 / NCIMB 13768 / 1H11) protein is Electron transfer flavoprotein subunit beta.